We begin with the raw amino-acid sequence, 524 residues long: Glucose-6-phosphate isomerase (524 aa).

Glu346 functions as the Proton donor in the catalytic mechanism. Residues His377 and Lys492 contribute to the active site.

The protein belongs to the GPI family.

It localises to the cytoplasm. The catalysed reaction is alpha-D-glucose 6-phosphate = beta-D-fructose 6-phosphate. It participates in carbohydrate biosynthesis; gluconeogenesis. The protein operates within carbohydrate degradation; glycolysis; D-glyceraldehyde 3-phosphate and glycerone phosphate from D-glucose: step 2/4. Functionally, catalyzes the reversible isomerization of glucose-6-phosphate to fructose-6-phosphate. This chain is Glucose-6-phosphate isomerase, found in Chlamydia trachomatis serovar A (strain ATCC VR-571B / DSM 19440 / HAR-13).